A 144-amino-acid chain; its full sequence is uncharacterized protein (144 aa).

4 helical membrane passes run 27-47 (VVCALAELVGVLLIDIDIPDI), 49-69 (LLPIDILAIDDIVDANVLLAL), 83-103 (IVLLALDIASMLIDAILDATV), and 106-126 (ALDMASIFMLLPIFIPSILNV).

The protein localises to the membrane. This is an uncharacterized protein from Saccharomyces cerevisiae (strain ATCC 204508 / S288c) (Baker's yeast).